An 858-amino-acid chain; its full sequence is Tetratricopeptide repeat protein 7A (858 aa).

Serine 51 bears the Phosphoserine mark. 6 TPR repeats span residues 121-157 (CEAM…MENK), 177-210 (ERLP…AQVF), 414-447 (FHLW…RPSD), 497-531 (YSLQ…APSD), 533-565 (QVIL…RKDD), and 566-599 (AHAL…HPEN). Serine 182 is modified (phosphoserine). Serine 647, serine 678, serine 679, and serine 690 each carry phosphoserine. Threonine 693 is subject to Phosphothreonine. TPR repeat units lie at residues 745–778 (HSVL…NPDG), 780–812 (RIMH…QSTC), and 813–846 (HEAW…EASS).

Component of a phosphatidylinositol 4-kinase (PI4K) complex, composed of PI4KA, EFR3 (EFR3A or EFR3B), TTC7 (TTC7A or TTC7B) and HYCC (HYCC1 or HYCC2). Interacts with PI4KA. Interaction with PI4KA is direct. Interacts with EFR3 (EFR3A or EFR3B), interaction is direct. Interacts with HYCC (HYCC1 or HYCC2), interaction is direct. Association with the PI4K complex is strongly reduced by TMEM150A. Expressed in epithelial cells of the intestine, thymus, and pancreas (at protein level).

Its subcellular location is the cytoplasm. It is found in the cell membrane. In terms of biological role, component of a complex required to localize phosphatidylinositol 4-kinase (PI4K) to the plasma membrane. The complex acts as a regulator of phosphatidylinositol 4-phosphate (PtdIns(4)P) synthesis. In the complex, plays a central role in bridging PI4KA to EFR3B and HYCC1, via direct interactions. This Homo sapiens (Human) protein is Tetratricopeptide repeat protein 7A.